The sequence spans 282 residues: Acetyl-coenzyme A carboxylase carboxyl transferase subunit beta (282 aa).

Residues 26 to 282 (GLWHQTPTGK…VSKTVKLLVH (257 aa)) enclose the CoA carboxyltransferase N-terminal domain.

The protein belongs to the AccD/PCCB family. Acetyl-CoA carboxylase is a heterohexamer composed of biotin carboxyl carrier protein (AccB), biotin carboxylase (AccC) and two subunits each of ACCase subunit alpha (AccA) and ACCase subunit beta (AccD).

The protein resides in the cytoplasm. It carries out the reaction N(6)-carboxybiotinyl-L-lysyl-[protein] + acetyl-CoA = N(6)-biotinyl-L-lysyl-[protein] + malonyl-CoA. Its pathway is lipid metabolism; malonyl-CoA biosynthesis; malonyl-CoA from acetyl-CoA: step 1/1. Functionally, component of the acetyl coenzyme A carboxylase (ACC) complex. Biotin carboxylase (BC) catalyzes the carboxylation of biotin on its carrier protein (BCCP) and then the CO(2) group is transferred by the transcarboxylase to acetyl-CoA to form malonyl-CoA. The polypeptide is Acetyl-coenzyme A carboxylase carboxyl transferase subunit beta (Flavobacteriaceae bacterium (strain 3519-10)).